We begin with the raw amino-acid sequence, 155 residues long: Ciliary microtubule inner protein 2C (155 aa).

Belongs to the CIMIP2 family.

The protein resides in the cytoplasm. Its subcellular location is the cytoskeleton. It is found in the cilium axoneme. In terms of biological role, microtubule inner protein (MIP) part of the dynein-decorated doublet microtubules (DMTs) in cilia axoneme, which is required for motile cilia beating. The chain is Ciliary microtubule inner protein 2C (cimip2ca) from Xenopus laevis (African clawed frog).